Consider the following 289-residue polypeptide: E3 ubiquitin-protein ligase MARCHF8 (289 aa).

The interval 1–68 (MNMPLHQISA…SAPVSSFPRT (68 aa)) is disordered. Positions 25 to 39 (KTKEKEREEQNEKTL) are enriched in basic and acidic residues. The segment covering 50 to 64 (SKAGGSSVASAPVSS) has biased composition (low complexity). Residues 70 to 131 (VTPSNQDICR…ELCKYEFIME (62 aa)) form an RING-CH-type zinc finger. Residues C78, C81, C95, C97, H105, C108, C121, and C124 each coordinate Zn(2+). 2 consecutive transmembrane segments (helical) span residues 155–175 (CSVT…YVLI) and 195–215 (FWTK…FMYV).

In terms of assembly, interacts with CD86.

The protein resides in the golgi apparatus membrane. It localises to the endoplasmic reticulum membrane. The protein localises to the cytoplasmic vesicle membrane. It is found in the lysosome membrane. Its subcellular location is the early endosome membrane. The enzyme catalyses S-ubiquitinyl-[E2 ubiquitin-conjugating enzyme]-L-cysteine + [acceptor protein]-L-lysine = [E2 ubiquitin-conjugating enzyme]-L-cysteine + N(6)-ubiquitinyl-[acceptor protein]-L-lysine.. It functions in the pathway protein modification; protein ubiquitination. In terms of biological role, E3 ubiquitin-protein ligase that plays several important roles in innate immunity and adaptive immunity. Mediates ubiquitination of CD86 and MHC class II proteins, such as HLA-DR alpha and beta, and promotes their subsequent endocytosis and sorting to lysosomes via multivesicular bodies. Possesses a very broad antiviral activity by specifically inactivating different viral fusion proteins. Targets and ubiquitinates cytoplasmic lysine residues of viral envelope glycoproteins with single transmembrane domains leading to their lysosomal degradation. Mediates the regulation of constitutive ubiquitination and trafficking of the viral restriction factor BST2 within the endocytic pathway. Plays a role in maintenance of immune tolerance to self by promoting the turnover and proteasomal degradation of PD-L1/CD274 via ubiquitination. Catalyzes the 'Lys-63'-linked polyubiquitylation of cGAS thereby inhibiting its DNA binding ability and impairing its antiviral innate immunity. Negatively regulates IL7-mediated T-cell homeostasis by mediating 'Lys-27'-linked polyubiquitination of IL7R, leading to its lysosomal degradation. This is E3 ubiquitin-protein ligase MARCHF8 (MARCHF8) from Bos taurus (Bovine).